A 340-amino-acid chain; its full sequence is Probable peroxidase 61 (340 aa).

The signal sequence occupies residues 1 to 25; the sequence is MQFVNFFPLLALVVISLAGKATVEA. 4 cysteine pairs are disulfide-bonded: C46/C122, C79/C84, C128/C331, and C205/C237. A glycan (N-linked (GlcNAc...) asparagine) is linked at N63. R73 is a catalytic residue. D78, V81, G83, D85, and S87 together coordinate Ca(2+). P168 serves as a coordination point for substrate. Residue H198 coordinates heme b. S199 provides a ligand contact to Ca(2+). N226 is a glycosylation site (N-linked (GlcNAc...) asparagine). Ca(2+) is bound by residues D255 and S258.

This sequence belongs to the peroxidase family. Classical plant (class III) peroxidase subfamily. Heme b serves as cofactor. Ca(2+) is required as a cofactor.

The protein localises to the secreted. The catalysed reaction is 2 a phenolic donor + H2O2 = 2 a phenolic radical donor + 2 H2O. Functionally, removal of H(2)O(2), oxidation of toxic reductants, biosynthesis and degradation of lignin, suberization, auxin catabolism, response to environmental stresses such as wounding, pathogen attack and oxidative stress. The enzyme activity has to be proved. In Arabidopsis thaliana (Mouse-ear cress), this protein is Probable peroxidase 61 (PER61).